Consider the following 154-residue polypeptide: OCIA domain-containing protein 2 (154 aa).

The tract at residues 1–23 (MASVSTHENQEKGPHLPPPSKQS) is disordered. The OCIA domain maps to 1 to 120 (MASVSTHENQ…HSFEGQLRGA (120 aa)). Lysine 41 is modified (N6-acetyllysine).

Interacts (via OCIA domain) with OCIAD1/ASRIJ and STAT3.

The protein localises to the endosome. It is found in the mitochondrion. It localises to the mitochondrion inner membrane. Has an essential role in the assembly of mitochondrial respiratory chain complex III. Is also required for STAT3 activation and plays a role in cell migration. The polypeptide is OCIA domain-containing protein 2 (OCIAD2) (Bos taurus (Bovine)).